The primary structure comprises 582 residues: Putative G-protein coupled receptor B0244.10 (582 aa).

4 helical membrane passes run 25–45, 70–90, 120–140, and 159–179; these read LYII…PLGL, ITFS…GFAV, WTFF…GLVI, and LLVQ…VFLT. Residue N190 is glycosylated (N-linked (GlcNAc...) asparagine). The chain crosses the membrane as a helical span at residues 199 to 218; it reads LTLGKWFIALYRFLFQMTNI. N221 and N237 each carry an N-linked (GlcNAc...) asparagine glycan. Transmembrane regions (helical) follow at residues 253–273, 296–316, 329–349, 377–397, and 421–441; these read SLMI…AVLV, YIFV…IIII, TFAF…SLLG, IYII…PFGL, and WLLF…LLFV. An N-linked (GlcNAc...) asparagine glycan is attached at N457. 2 helical membrane-spanning segments follow: residues 475-495 and 513-533; these read TILV…AAFG and LIFP…TFLL. N-linked (GlcNAc...) asparagine glycosylation occurs at N538.

Belongs to the G-protein coupled receptor 1 family. B0244 subfamily.

The protein resides in the cell membrane. The polypeptide is Putative G-protein coupled receptor B0244.10 (Caenorhabditis elegans).